The sequence spans 608 residues: Elongation factor 4 (608 aa).

In terms of domain architecture, tr-type G spans 11 to 193; the sequence is DRIRNFSIIA…QIVQKIPAPS (183 aa). Residues 23–28 and 140–143 each bind GTP; these read DHGKST and NKID.

Belongs to the TRAFAC class translation factor GTPase superfamily. Classic translation factor GTPase family. LepA subfamily.

It is found in the cell membrane. The enzyme catalyses GTP + H2O = GDP + phosphate + H(+). Its function is as follows. Required for accurate and efficient protein synthesis under certain stress conditions. May act as a fidelity factor of the translation reaction, by catalyzing a one-codon backward translocation of tRNAs on improperly translocated ribosomes. Back-translocation proceeds from a post-translocation (POST) complex to a pre-translocation (PRE) complex, thus giving elongation factor G a second chance to translocate the tRNAs correctly. Binds to ribosomes in a GTP-dependent manner. The sequence is that of Elongation factor 4 from Anoxybacillus flavithermus (strain DSM 21510 / WK1).